Here is a 350-residue protein sequence, read N- to C-terminus: S-adenosylmethionine:tRNA ribosyltransferase-isomerase (350 aa).

Belongs to the QueA family. Monomer.

Its subcellular location is the cytoplasm. It catalyses the reaction 7-aminomethyl-7-carbaguanosine(34) in tRNA + S-adenosyl-L-methionine = epoxyqueuosine(34) in tRNA + adenine + L-methionine + 2 H(+). It functions in the pathway tRNA modification; tRNA-queuosine biosynthesis. Functionally, transfers and isomerizes the ribose moiety from AdoMet to the 7-aminomethyl group of 7-deazaguanine (preQ1-tRNA) to give epoxyqueuosine (oQ-tRNA). In Bacillus cereus (strain ZK / E33L), this protein is S-adenosylmethionine:tRNA ribosyltransferase-isomerase.